The chain runs to 87 residues: Mitochondrial import inner membrane translocase subunit TIM8 (87 aa).

Positions 44–68 match the Twin CX3C motif motif; sequence CFKKCISRVDNGNLSSQEEECLASC. 2 disulfide bridges follow: cysteine 44/cysteine 68 and cysteine 48/cysteine 64.

The protein belongs to the small Tim family. In terms of assembly, heterohexamer; composed of 3 copies of TIM8 and 3 copies of TIM13, named soluble 70 kDa complex. Associates with the TIM22 complex, whose core is composed of TIM22 and TIM54. Interacts with the transmembrane regions of multi-pass transmembrane proteins in transit.

Its subcellular location is the mitochondrion inner membrane. In terms of biological role, mitochondrial intermembrane chaperone that participates in the import and insertion of some multi-pass transmembrane proteins into the mitochondrial inner membrane. Also required for the transfer of beta-barrel precursors from the TOM complex to the sorting and assembly machinery (SAM complex) of the outer membrane. Acts as a chaperone-like protein that protects the hydrophobic precursors from aggregation and guide them through the mitochondrial intermembrane space. The TIM8-TIM13 complex is non essential and only mediates the import of few proteins, while the predominant TIM9-TIM10 70 kDa complex is crucial and mediates the import of much more proteins. This Candida glabrata (strain ATCC 2001 / BCRC 20586 / JCM 3761 / NBRC 0622 / NRRL Y-65 / CBS 138) (Yeast) protein is Mitochondrial import inner membrane translocase subunit TIM8 (TIM8).